The primary structure comprises 249 residues: Probable phosphatase Shal_1519 (249 aa).

Residues His8, His10, His16, His41, Glu74, His102, His132, Asp193, and His195 each coordinate Zn(2+).

This sequence belongs to the PHP family. Zn(2+) is required as a cofactor.

The chain is Probable phosphatase Shal_1519 from Shewanella halifaxensis (strain HAW-EB4).